The following is a 105-amino-acid chain: Met repressor (105 aa).

Belongs to the MetJ family. In terms of assembly, homodimer.

The protein localises to the cytoplasm. This regulatory protein, when combined with SAM (S-adenosylmethionine) represses the expression of the methionine regulon and of enzymes involved in SAM synthesis. The protein is Met repressor of Vibrio vulnificus (strain CMCP6).